A 322-amino-acid chain; its full sequence is NADH-quinone oxidoreductase subunit H (322 aa).

8 helical membrane passes run 12-32 (IGKA…MSFI), 79-99 (IFIL…AVVP), 111-131 (VGLL…LFAG), 151-171 (LSYE…TGSF), 183-203 (LWNV…GVAV), 234-254 (FFVG…TLFF), 262-282 (LPPF…FILL), and 301-321 (VCLP…LMNV).

Belongs to the complex I subunit 1 family. In terms of assembly, NDH-1 is composed of 13 different subunits. Subunits NuoA, H, J, K, L, M, N constitute the membrane sector of the complex.

Its subcellular location is the cell inner membrane. It carries out the reaction a quinone + NADH + 5 H(+)(in) = a quinol + NAD(+) + 4 H(+)(out). Its function is as follows. NDH-1 shuttles electrons from NADH, via FMN and iron-sulfur (Fe-S) centers, to quinones in the respiratory chain. The immediate electron acceptor for the enzyme in this species is believed to be ubiquinone. Couples the redox reaction to proton translocation (for every two electrons transferred, four hydrogen ions are translocated across the cytoplasmic membrane), and thus conserves the redox energy in a proton gradient. This subunit may bind ubiquinone. In Shewanella oneidensis (strain ATCC 700550 / JCM 31522 / CIP 106686 / LMG 19005 / NCIMB 14063 / MR-1), this protein is NADH-quinone oxidoreductase subunit H.